Here is a 478-residue protein sequence, read N- to C-terminus: tRNA(Ile)-lysidine synthase (478 aa).

Position 27–32 (27–32) interacts with ATP; it reads SGGSDS.

It belongs to the tRNA(Ile)-lysidine synthase family.

It is found in the cytoplasm. It catalyses the reaction cytidine(34) in tRNA(Ile2) + L-lysine + ATP = lysidine(34) in tRNA(Ile2) + AMP + diphosphate + H(+). Ligates lysine onto the cytidine present at position 34 of the AUA codon-specific tRNA(Ile) that contains the anticodon CAU, in an ATP-dependent manner. Cytidine is converted to lysidine, thus changing the amino acid specificity of the tRNA from methionine to isoleucine. The sequence is that of tRNA(Ile)-lysidine synthase from Rickettsia africae (strain ESF-5).